The following is a 299-amino-acid chain: MDPTLISLGALALAGAAATVSGCAEDLESDVGSQSNPNSQVQLGPQMGNIHRYFNKAISGEPVSYGLYVAVAGSVAWALINAGLNAVLALIIGSGVAAIVHGAYSVSAFLGRTVGQSQKFGQPVYMDVLTSHIGPIVGHGFIAVFTMVLAAYLAVTALGNPFPLPLVALIFGITVGAIGSSTGDVHYGAEREYQKYAFGGGIPVANQGDIDIYAEYGIRNGLDSSYFCSRLGGPLTGLCFGLIIFLDGWRSIVGNIIGGDLVTKTSIALVVGLLVVVAAMILNRKIEVFARNKYGPYRN.

Transmembrane regions (helical) follow at residues 57–77, 80–100, 133–153, 158–178, 237–257, and 261–281; these read AISG…SVAW, INAG…AAIV, IGPI…AAYL, LGNP…VGAI, GLCF…GNII, and LVTK…AAMI.

Belongs to the MtrE family. As to quaternary structure, the complex is composed of 8 subunits; MtrA, MtrB, MtrC, MtrD, MtrE, MtrF, MtrG and MtrH.

The protein localises to the cell membrane. It carries out the reaction 5-methyl-5,6,7,8-tetrahydromethanopterin + coenzyme M + 2 Na(+)(in) = 5,6,7,8-tetrahydromethanopterin + methyl-coenzyme M + 2 Na(+)(out). It participates in one-carbon metabolism; methanogenesis from CO(2); methyl-coenzyme M from 5,10-methylene-5,6,7,8-tetrahydromethanopterin: step 2/2. In terms of biological role, part of a complex that catalyzes the formation of methyl-coenzyme M and tetrahydromethanopterin from coenzyme M and methyl-tetrahydromethanopterin. This is an energy-conserving, sodium-ion translocating step. The protein is Tetrahydromethanopterin S-methyltransferase subunit E of Methanococcus vannielii (strain ATCC 35089 / DSM 1224 / JCM 13029 / OCM 148 / SB).